The chain runs to 149 residues: Large ribosomal subunit protein uL15 (149 aa).

The span at 1–28 (MVIKIHDLRPAPGSKRDKIRVGRGEGSK) shows a compositional bias: basic and acidic residues. The tract at residues 1–54 (MVIKIHDLRPAPGSKRDKIRVGRGEGSKGKTAGRGTKGTKARKNVSPRFEGGQM) is disordered.

It belongs to the universal ribosomal protein uL15 family. Part of the 50S ribosomal subunit.

Binds to the 23S rRNA. The polypeptide is Large ribosomal subunit protein uL15 (Saccharopolyspora erythraea (strain ATCC 11635 / DSM 40517 / JCM 4748 / NBRC 13426 / NCIMB 8594 / NRRL 2338)).